Consider the following 215-residue polypeptide: UPF0502 protein YceH (215 aa).

The residue at position 80 (K80) is an N6-acetyllysine.

This sequence belongs to the UPF0502 family.

The protein is UPF0502 protein YceH of Shigella sonnei (strain Ss046).